Here is a 3925-residue protein sequence, read N- to C-terminus: Polyketide synthase ThaH (3925 aa).

The interval 1-56 (MPRWRPTWLKRLSCPKQPRHPTHPKHPTHPKHPKHPKHPRHPKHPRISRRCSSASA) is disordered. The span at 17-49 (QPRHPTHPKHPTHPKHPKHPKHPRHPKHPRISR) shows a compositional bias: basic residues. The region spanning 1073–1148 (GLVGGLEGEV…DIAGYIASAE (76 aa)) is the Carrier 1 domain. Serine 1108 is modified (O-(pantetheine 4'-phosphoryl)serine). Positions 1166 to 1182 (AAVATPPGRPAGEAAGA) are enriched in low complexity. The disordered stretch occupies residues 1166-1233 (AAVATPPGRP…GEPARAASHG (68 aa)). Positions 1183 to 1196 (QRDRAPRAADERAD) are enriched in basic and acidic residues. Residues 1202–1216 (PSDAHASKAAAIDSR) show a composition bias toward low complexity. In terms of domain architecture, Ketosynthase family 3 (KS3) 1 spans 1237–1667 (ADGLAIIGIA…GTNAHALVEA (431 aa)). Active-site for beta-ketoacyl synthase 1 activity residues include cysteine 1413, histidine 1549, and histidine 1589. Residues 1679–1698 (GATGAPDVPDAPDAPDAPDA) form a disordered region. The tract at residues 1844-1969 (HPLLHRNVST…GHVQRIAEPA (126 aa)) is N-terminal hotdog fold. A PKS/mFAS DH domain is found at 1844-2143 (HPLLHRNVST…ARRFVREPAR (300 aa)). Histidine 1873 acts as the Proton acceptor; for dehydratase activity in catalysis. The segment at 1983 to 2143 (AAPRLSAARC…ARRFVREPAR (161 aa)) is C-terminal hotdog fold. The active-site Proton donor; for dehydratase activity is aspartate 2043. 2 stretches are compositionally biased toward low complexity: residues 2594 to 2607 (DDPAAASIEPAASS) and 2632 to 2646 (PAAAVAHAAPDASDA). 2 disordered regions span residues 2594–2613 (DDPAAASIEPAASSTELPEM) and 2619–2657 (APADAGARPRDDAPAAAVAHAAPDASDAPDARPADAAPA). The 74-residue stretch at 2664–2737 (EHALALLKRL…ELACYFVAHH (74 aa)) folds into the Carrier 2 domain. Serine 2698 carries the post-translational modification O-(pantetheine 4'-phosphoryl)serine. Positions 2753–2768 (LAPAPAQPLAPRAPSA) are enriched in low complexity. The disordered stretch occupies residues 2753-2841 (LAPAPAQPLA…AHAPAQASAP (89 aa)). Residues 2770-2779 (PARDAARSLE) show a composition bias toward basic and acidic residues. Composition is skewed to low complexity over residues 2789–2813 (GQEPEPASQTAAASESARAPAQASA) and 2823–2841 (ETRTQAPAQAHAPAQASAP). One can recognise a Ketosynthase family 3 (KS3) 2 domain in the interval 2847–3286 (AFDIAIVGLA…GSNAHLIVEE (440 aa)). Catalysis depends on for beta-ketoacyl synthase 2 activity residues cysteine 3022, histidine 3157, and histidine 3197. Low complexity-rich tracts occupy residues 3512–3524 (ASTASRAGTPSPA) and 3578–3592 (AAAARARPGAASSPS). 2 disordered regions span residues 3512–3531 (ASTASRAGTPSPAVAASTGE) and 3578–3619 (AAAA…AAPD). Positions 3593–3603 (PSSPSPLPSSP) are enriched in pro residues. A compositionally biased stretch (low complexity) spans 3604-3619 (PRMSSRQHASPAAAPD). Residues 3622–3699 (AALLDIEAFL…AMARHVSSNA (78 aa)) enclose the Carrier 3 domain. Residue serine 3659 is modified to O-(pantetheine 4'-phosphoryl)serine. The disordered stretch occupies residues 3734–3754 (PAPFASAAPPEPPASPARADG). One can recognise a Carrier 4 domain in the interval 3762–3839 (TSLDAIRAHL…ALARFVGTQL (78 aa)). Serine 3799 is modified (O-(pantetheine 4'-phosphoryl)serine).

It belongs to the ATP-dependent AMP-binding enzyme family. The cofactor is pantetheine 4'-phosphate.

Its subcellular location is the cytoplasm. Its pathway is antibiotic biosynthesis. Involved in production of the polyketide antibiotic thailandamide. The polypeptide is Polyketide synthase ThaH (Burkholderia thailandensis (strain ATCC 700388 / DSM 13276 / CCUG 48851 / CIP 106301 / E264)).